A 655-amino-acid chain; its full sequence is NAD(P)H-quinone oxidoreductase subunit 5, chloroplastic (655 aa).

16 consecutive transmembrane segments (helical) span residues 7–27 (YAWLIPILPFLGSMIIGLGLI), 40–60 (FAFFNIVLLGIALIFSISILI), 89–109 (IDPLTSVMLVLVTSVAILVMI), 124–144 (FFAYLSLFTASMLGLVLSPNL), 147–167 (IYVFWELVGMCSYLLIGFWFT), 185–205 (GDFGLFLGILGLYWVTGSFEF), 226–246 (HPVQVELLVLFNLLVFLGPMA), 265–285 (TPISALIHAATMVAAGVFLVA), 296–316 (IVMGFIAWIGAITAIIAAIIA), 334–354 (LGYMIMAMGVGSYTAGLFHLI), 361–381 (ALLFLGSGSVIHGMEPVVGFN), 402–422 (AITFLLGTLSLCGIPPMACFW), 434–454 (AQPILWIIAWVTAGLTSFYMF), 488–508 (ILIPLIILALVTTLVGFVGTP), 533–553 (LSMSGSSVGIALIGLTLASLI), and 635–655 (QSYVFVIIFATLIFVLASQGF).

The protein belongs to the complex I subunit 5 family. As to quaternary structure, NDH is composed of at least 16 different subunits, 5 of which are encoded in the nucleus.

The protein resides in the plastid. It is found in the chloroplast thylakoid membrane. It carries out the reaction a plastoquinone + NADH + (n+1) H(+)(in) = a plastoquinol + NAD(+) + n H(+)(out). The catalysed reaction is a plastoquinone + NADPH + (n+1) H(+)(in) = a plastoquinol + NADP(+) + n H(+)(out). NDH shuttles electrons from NAD(P)H:plastoquinone, via FMN and iron-sulfur (Fe-S) centers, to quinones in the photosynthetic chain and possibly in a chloroplast respiratory chain. The immediate electron acceptor for the enzyme in this species is believed to be plastoquinone. Couples the redox reaction to proton translocation, and thus conserves the redox energy in a proton gradient. The chain is NAD(P)H-quinone oxidoreductase subunit 5, chloroplastic (ndhF) from Chlorokybus atmophyticus (Soil alga).